The primary structure comprises 285 residues: ATP phosphoribosyltransferase (285 aa).

This sequence belongs to the ATP phosphoribosyltransferase family. Long subfamily. The cofactor is Mg(2+).

The protein resides in the cytoplasm. It carries out the reaction 1-(5-phospho-beta-D-ribosyl)-ATP + diphosphate = 5-phospho-alpha-D-ribose 1-diphosphate + ATP. The protein operates within amino-acid biosynthesis; L-histidine biosynthesis; L-histidine from 5-phospho-alpha-D-ribose 1-diphosphate: step 1/9. With respect to regulation, feedback inhibited by histidine. In terms of biological role, catalyzes the condensation of ATP and 5-phosphoribose 1-diphosphate to form N'-(5'-phosphoribosyl)-ATP (PR-ATP). Has a crucial role in the pathway because the rate of histidine biosynthesis seems to be controlled primarily by regulation of HisG enzymatic activity. In Metallosphaera sedula (strain ATCC 51363 / DSM 5348 / JCM 9185 / NBRC 15509 / TH2), this protein is ATP phosphoribosyltransferase.